The sequence spans 315 residues: Replication factor C small subunit (315 aa).

43–50 (GSPGVGKT) provides a ligand contact to ATP.

It belongs to the activator 1 small subunits family. RfcS subfamily. Heteromultimer composed of small subunits (RfcS) and large subunits (RfcL).

Its function is as follows. Part of the RFC clamp loader complex which loads the PCNA sliding clamp onto DNA. This chain is Replication factor C small subunit, found in Methanococcus maripaludis (strain C6 / ATCC BAA-1332).